The sequence spans 289 residues: Acetyl-coenzyme A carboxylase carboxyl transferase subunit beta (289 aa).

One can recognise a CoA carboxyltransferase N-terminal domain in the interval 28–289; the sequence is VMTKCPKCKK…QGGGMAVWQS (262 aa). Zn(2+) contacts are provided by cysteine 32, cysteine 35, cysteine 51, and cysteine 54. The C4-type zinc-finger motif lies at 32-54; that stretch reads CPKCKKIMYTKELLKNLKVCVNC.

It belongs to the AccD/PCCB family. Acetyl-CoA carboxylase is a heterohexamer composed of biotin carboxyl carrier protein (AccB), biotin carboxylase (AccC) and two subunits each of ACCase subunit alpha (AccA) and ACCase subunit beta (AccD). The cofactor is Zn(2+).

The protein resides in the cytoplasm. The enzyme catalyses N(6)-carboxybiotinyl-L-lysyl-[protein] + acetyl-CoA = N(6)-biotinyl-L-lysyl-[protein] + malonyl-CoA. It participates in lipid metabolism; malonyl-CoA biosynthesis; malonyl-CoA from acetyl-CoA: step 1/1. In terms of biological role, component of the acetyl coenzyme A carboxylase (ACC) complex. Biotin carboxylase (BC) catalyzes the carboxylation of biotin on its carrier protein (BCCP) and then the CO(2) group is transferred by the transcarboxylase to acetyl-CoA to form malonyl-CoA. The protein is Acetyl-coenzyme A carboxylase carboxyl transferase subunit beta of Bacillus mycoides (strain KBAB4) (Bacillus weihenstephanensis).